We begin with the raw amino-acid sequence, 226 residues long: PKHD-type hydroxylase Plav_0377 (226 aa).

Residues 78–178 enclose the Fe2OG dioxygenase domain; sequence KVLPPRFNRY…RLASFFWVQS (101 aa). His-96, Asp-98, and His-159 together coordinate Fe cation. 2-oxoglutarate is bound at residue Arg-169.

Fe(2+) serves as cofactor. L-ascorbate is required as a cofactor.

This chain is PKHD-type hydroxylase Plav_0377, found in Parvibaculum lavamentivorans (strain DS-1 / DSM 13023 / NCIMB 13966).